The primary structure comprises 506 residues: uncharacterized protein (506 aa).

Belongs to the Mg-chelatase subunits D/I family. ComM subfamily.

This is an uncharacterized protein from Escherichia coli (strain K12).